Reading from the N-terminus, the 899-residue chain is Semaphorin-1A (899 aa).

The segment covering 1–20 (MLNSHNTNHNNNSASNSNYN) has biased composition (low complexity). Positions 1–24 (MLNSHNTNHNNNSASNSNYNKGHK) are disordered. Topologically, residues 1-40 (MLNSHNTNHNNNSASNSNYNKGHKMHLKSATAKATIMKHK) are cytoplasmic. Residues 41 to 61 (LSKFYGYGWMQVFLLLTVLVI) traverse the membrane as a helical segment. Residues 62–657 (GNQSAWQENI…INAQYTVETL (596 aa)) lie on the Extracellular side of the membrane. Asn-63, Asn-90, and Asn-117 each carry an N-linked (GlcNAc...) asparagine glycan. Positions 74–543 (KLYVELGPED…TDSQVVAIQL (470 aa)) constitute a Sema domain. 2 disulfides stabilise this stretch: Cys-141–Cys-151 and Cys-169–Cys-178. Residues Asn-187, Asn-207, and Asn-311 are each glycosylated (N-linked (GlcNAc...) asparagine). Disulfide bonds link Cys-288-Cys-402 and Cys-312-Cys-361. N-linked (GlcNAc...) asparagine glycosylation is present at Asn-404. Residues 658–678 (VMAVLAGSIFSLLVGFFTGYF) form a helical membrane-spanning segment. Over 679 to 899 (CGRRCHKDED…PKNCSYIYRD (221 aa)) the chain is Cytoplasmic. 2 disordered regions span residues 735-766 (VLLP…QGPN) and 798-899 (VMGD…IYRD). The span at 809–827 (FSTTRSVKKAVNNTNTRNR) shows a compositional bias: polar residues. The segment covering 828–837 (SLGRARRQPP) has biased composition (basic residues). Residues 847–876 (SNSPQQQQQQSQQPHSSSGSSPVMSNSSSS) are compositionally biased toward low complexity.

This sequence belongs to the semaphorin family. In terms of tissue distribution, expressed by subsets of neurons and muscles.

It is found in the cell membrane. Functionally, involved in growth cone guidance through its role in axonal repulsion. Function in neurons is essential for adult survival, motor neuron survival, and is important for climbing behavior and activity. The sequence is that of Semaphorin-1A from Drosophila melanogaster (Fruit fly).